Reading from the N-terminus, the 452-residue chain is Enolase (452 aa).

Gln-167 is a (2R)-2-phosphoglycerate binding site. Glu-209 (proton donor) is an active-site residue. Positions 250, 310, and 337 each coordinate Mg(2+). Positions 362, 391, 392, and 413 each coordinate (2R)-2-phosphoglycerate. Residue Lys-362 is the Proton acceptor of the active site.

It belongs to the enolase family. Requires Mg(2+) as cofactor.

The protein localises to the cytoplasm. The protein resides in the secreted. It localises to the cell surface. It catalyses the reaction (2R)-2-phosphoglycerate = phosphoenolpyruvate + H2O. The protein operates within carbohydrate degradation; glycolysis; pyruvate from D-glyceraldehyde 3-phosphate: step 4/5. Functionally, catalyzes the reversible conversion of 2-phosphoglycerate (2-PG) into phosphoenolpyruvate (PEP). It is essential for the degradation of carbohydrates via glycolysis. In Mycoplasmopsis synoviae (strain 53) (Mycoplasma synoviae), this protein is Enolase.